We begin with the raw amino-acid sequence, 321 residues long: Beta-ketoacyl-[acyl-carrier-protein] synthase III (321 aa).

Catalysis depends on residues C116 and H248. Residues 249–253 form an ACP-binding region; it reads QANLR. N278 is an active-site residue.

The protein belongs to the thiolase-like superfamily. FabH family. As to quaternary structure, homodimer.

The protein resides in the cytoplasm. The enzyme catalyses malonyl-[ACP] + acetyl-CoA + H(+) = 3-oxobutanoyl-[ACP] + CO2 + CoA. Its pathway is lipid metabolism; fatty acid biosynthesis. Its function is as follows. Catalyzes the condensation reaction of fatty acid synthesis by the addition to an acyl acceptor of two carbons from malonyl-ACP. Catalyzes the first condensation reaction which initiates fatty acid synthesis and may therefore play a role in governing the total rate of fatty acid production. Possesses both acetoacetyl-ACP synthase and acetyl transacylase activities. Its substrate specificity determines the biosynthesis of branched-chain and/or straight-chain of fatty acids. The chain is Beta-ketoacyl-[acyl-carrier-protein] synthase III from Yersinia enterocolitica serotype O:8 / biotype 1B (strain NCTC 13174 / 8081).